Here is a 315-residue protein sequence, read N- to C-terminus: Ester hydrolase C11orf54 homolog (315 aa).

Residues His266, His268, and His278 each coordinate Zn(2+).

As to quaternary structure, monomer. It depends on Zn(2+) as a cofactor.

It localises to the nucleus. It is found in the cytoplasm. Functionally, exhibits ester hydrolase activity on the substrate p-nitrophenyl acetate, in vitro. Regulates DNA damage and repair by regulating HIF1A degradation via chaperone-mediated autophagy (CMA). The polypeptide is Ester hydrolase C11orf54 homolog (Rattus norvegicus (Rat)).